The primary structure comprises 408 residues: Argininosuccinate synthase (408 aa).

ATP is bound by residues 16–24 (AYSGGLDTS) and Ala44. L-citrulline-binding residues include Tyr96 and Ser101. ATP is bound at residue Gly126. Positions 128, 132, and 133 each coordinate L-aspartate. Position 132 (Asn132) interacts with L-citrulline. Residues Arg136, Ser185, Ser194, Glu270, and Tyr282 each coordinate L-citrulline.

Belongs to the argininosuccinate synthase family. Type 1 subfamily. In terms of assembly, homotetramer.

It is found in the cytoplasm. The enzyme catalyses L-citrulline + L-aspartate + ATP = 2-(N(omega)-L-arginino)succinate + AMP + diphosphate + H(+). The protein operates within amino-acid biosynthesis; L-arginine biosynthesis; L-arginine from L-ornithine and carbamoyl phosphate: step 2/3. This is Argininosuccinate synthase from Shewanella woodyi (strain ATCC 51908 / MS32).